Reading from the N-terminus, the 83-residue chain is UPF0729 protein CBG02799 (83 aa).

The tract at residues 51–83 (QEKKEEEEEKEKSCCSTEAENTTEVTTETKKDQ) is disordered. The segment covering 67–76 (TEAENTTEVT) has biased composition (low complexity).

It belongs to the UPF0729 family.

This Caenorhabditis briggsae protein is UPF0729 protein CBG02799.